Here is a 200-residue protein sequence, read N- to C-terminus: Somatotropin (200 aa).

An N-terminal signal peptide occupies residues 1 to 22 (MARVLVLLSVVVASLLFSQGAT). His38 lines the Zn(2+) pocket. Cysteines 71 and 173 form a disulfide. Glu182 is a Zn(2+) binding site. The cysteines at positions 190 and 198 are disulfide-linked.

The protein belongs to the somatotropin/prolactin family.

Its subcellular location is the secreted. Its function is as follows. Growth hormone plays an important role in growth control and is involved in the regulation of several anabolic processes. Implicated as an osmoregulatory substance important for seawater adaptation. This is Somatotropin (gh) from Ictalurus punctatus (Channel catfish).